A 358-amino-acid polypeptide reads, in one-letter code: Alanine racemase (358 aa).

Residue lysine 35 is the Proton acceptor; specific for D-alanine of the active site. N6-(pyridoxal phosphate)lysine is present on lysine 35. Arginine 130 provides a ligand contact to substrate. Tyrosine 255 serves as the catalytic Proton acceptor; specific for L-alanine. Methionine 303 provides a ligand contact to substrate.

It belongs to the alanine racemase family. Requires pyridoxal 5'-phosphate as cofactor.

It carries out the reaction L-alanine = D-alanine. Its pathway is amino-acid biosynthesis; D-alanine biosynthesis; D-alanine from L-alanine: step 1/1. Catalyzes the interconversion of L-alanine and D-alanine. May also act on other amino acids. This is Alanine racemase (alr) from Shewanella oneidensis (strain ATCC 700550 / JCM 31522 / CIP 106686 / LMG 19005 / NCIMB 14063 / MR-1).